The primary structure comprises 218 residues: uncharacterized protein (218 aa).

A run of 2 helical transmembrane segments spans residues 8 to 28 (LAVFLIILVGILLLGGIATAG) and 158 to 178 (ILFYTGISIIGAFFVSGFLLI).

The protein localises to the cell membrane. This is an uncharacterized protein from Mycoplasma genitalium (strain ATCC 33530 / DSM 19775 / NCTC 10195 / G37) (Mycoplasmoides genitalium).